A 324-amino-acid chain; its full sequence is MWRLLHCILGFIRLYLDGVKVLLYQLFNKSFRLPDLPEQNGKVAIVTGGTRGMGYEISRHLVSLDMHVIIAGNEEEEGLAAVKKIQEELNQGKVEFMYLDLASLTSVRQFVQRYNAKGLPLHVLVNNAGVMLVPERRTEDGFELHFGLNYLGHFLLTNLLLGALRKTGKPGKCSRIVIMSSATHYGGRLTLDDLQGRLCYSSHAAYAQSKLALLLLSYHLQEQLLVRGDPVTVNAVDPGMVDTALYDNLCSPAQVAKKPFAKLLFRTPAEGASTAIYAAAASELEGIGGLYLYNGRKTESSALSYDKRLQTKLWKQSCALVGLK.

The active-site Proton acceptor is the Tyr-206. NAD(+) contacts are provided by Tyr-206, Lys-210, and Thr-243.

Belongs to the short-chain dehydrogenases/reductases (SDR) family.

It is found in the lipid droplet. The catalysed reaction is a di-trans,poly-cis-polyprenol + NAD(+) = a di-trans,poly-cis-polyprenal + NADH + H(+). The enzyme catalyses a di-trans,poly-cis-polyprenol + NADP(+) = a di-trans,poly-cis-polyprenal + NADPH + H(+). It catalyses the reaction a di-trans,poly-cis-dolichol + NADP(+) = a di-trans,poly-cis-dolichal + NADPH + H(+). It carries out the reaction a di-trans,poly-cis-dolichol + NAD(+) = a di-trans,poly-cis-dolichal + NADH + H(+). It participates in protein modification; protein glycosylation. Functionally, oxidoreductase that plays a key role in early steps of protein N-linked glycosylation by mediating two non-consecutive steps in dolichol biosynthesis. Acts both as a NAD(+)-dependent dehydrogenase and as a NADPH-dependent reductase during the conversion of polyprenol into dolichol. First catalyzes the NAD(+)-dependent dehydrogenation of polyprenol into polyprenal; polyprenal is then reduced into dolichal by srd5a3. It then catalyzes the NADPH-dependent reduction of dolichal into dolichol. This Danio rerio (Zebrafish) protein is Polyprenol dehydrogenase.